A 272-amino-acid polypeptide reads, in one-letter code: Formamidopyrimidine-DNA glycosylase (272 aa).

Proline 2 (schiff-base intermediate with DNA) is an active-site residue. Catalysis depends on glutamate 3, which acts as the Proton donor. Lysine 58 (proton donor; for beta-elimination activity) is an active-site residue. DNA is bound by residues histidine 91, arginine 111, and arginine 153. An FPG-type zinc finger spans residues 238–272; the sequence is AVYGRANKACVICSKPLKEIRQAQRSTVFCINCQS. The active-site Proton donor; for delta-elimination activity is the arginine 262.

It belongs to the FPG family. Monomer. It depends on Zn(2+) as a cofactor.

It carries out the reaction Hydrolysis of DNA containing ring-opened 7-methylguanine residues, releasing 2,6-diamino-4-hydroxy-5-(N-methyl)formamidopyrimidine.. The catalysed reaction is 2'-deoxyribonucleotide-(2'-deoxyribose 5'-phosphate)-2'-deoxyribonucleotide-DNA = a 3'-end 2'-deoxyribonucleotide-(2,3-dehydro-2,3-deoxyribose 5'-phosphate)-DNA + a 5'-end 5'-phospho-2'-deoxyribonucleoside-DNA + H(+). Functionally, involved in base excision repair of DNA damaged by oxidation or by mutagenic agents. Acts as a DNA glycosylase that recognizes and removes damaged bases. Has a preference for oxidized purines, such as 7,8-dihydro-8-oxoguanine (8-oxoG). Has AP (apurinic/apyrimidinic) lyase activity and introduces nicks in the DNA strand. Cleaves the DNA backbone by beta-delta elimination to generate a single-strand break at the site of the removed base with both 3'- and 5'-phosphates. This chain is Formamidopyrimidine-DNA glycosylase, found in Marinomonas sp. (strain MWYL1).